We begin with the raw amino-acid sequence, 188 residues long: HGPRTase-like protein 1 (188 aa).

The protein belongs to the purine/pyrimidine phosphoribosyltransferase family. Archaeal HPRT subfamily.

Functionally, may catalyze a purine salvage reaction, the substrate is unknown. The chain is HGPRTase-like protein 1 from Haloferax volcanii (strain ATCC 29605 / DSM 3757 / JCM 8879 / NBRC 14742 / NCIMB 2012 / VKM B-1768 / DS2) (Halobacterium volcanii).